We begin with the raw amino-acid sequence, 317 residues long: Nuclear distribution protein nudE homolog (317 aa).

The stretch at 29–180 (TDVKQEYDEF…LKQELNVKSR (152 aa)) forms a coiled coil. The interval 186–205 (NGTSVPTANDTNTVNSSMNS) is disordered.

The protein belongs to the nudE family.

Its subcellular location is the cytoplasm. It localises to the cytoskeleton. The protein localises to the microtubule organizing center. It is found in the centrosome. The protein resides in the spindle. Its function is as follows. Chaperone protein with functions in nuclear localization. Required for centrosome duplication and formation and function of the mitotic spindle. In postmitotic neurons, acts with nudC downstream of dar1 to ensure correct positioning of the nuclei in primary dendrites and as a consequence, is required for determining multipolar neuron morphology. This Drosophila melanogaster (Fruit fly) protein is Nuclear distribution protein nudE homolog.